The chain runs to 141 residues: MKKKRFNSDIEVQAFARHICMSAHKMRRVIDQIRGRSYEQTLMILELMPYRASYPIFRLIYSAAANASKTMGSKEADSLISKAEVNEGTFIKKLKPRARGRSYPIKKPTCHIIIVLKDKSKKPKSFLERKYGFVDKYMIGK.

The protein belongs to the universal ribosomal protein uL22 family. As to quaternary structure, part of the 50S ribosomal subunit.

Its subcellular location is the plastid. It is found in the chloroplast. This protein binds specifically to 23S rRNA. In terms of biological role, the globular domain of the protein is located near the polypeptide exit tunnel on the outside of the subunit, while an extended beta-hairpin is found that lines the wall of the exit tunnel in the center of the 70S ribosome. In Chloranthus spicatus (Chulantree), this protein is Large ribosomal subunit protein uL22c (rpl22).